A 661-amino-acid polypeptide reads, in one-letter code: Zinc finger protein 81 (661 aa).

The KRAB domain maps to valine 21–serine 92. A Glycyl lysine isopeptide (Lys-Gly) (interchain with G-Cter in SUMO2) cross-link involves residue lysine 266. C2H2-type zinc fingers lie at residues tyrosine 330–histidine 352, tyrosine 358–histidine 380, phenylalanine 386–histidine 408, histidine 414–histidine 436, tyrosine 442–histidine 464, tyrosine 470–histidine 492, tyrosine 498–histidine 520, tyrosine 526–histidine 548, tyrosine 554–histidine 576, tyrosine 582–histidine 604, tyrosine 610–histidine 632, and tyrosine 638–histidine 660.

Belongs to the krueppel C2H2-type zinc-finger protein family.

The protein localises to the nucleus. Functionally, may be involved in transcriptional regulation. The polypeptide is Zinc finger protein 81 (ZNF81) (Homo sapiens (Human)).